The chain runs to 173 residues: Ribosome maturation factor RimP (173 aa).

It belongs to the RimP family.

The protein localises to the cytoplasm. Required for maturation of 30S ribosomal subunits. The polypeptide is Ribosome maturation factor RimP (Chlorobaculum tepidum (strain ATCC 49652 / DSM 12025 / NBRC 103806 / TLS) (Chlorobium tepidum)).